A 357-amino-acid chain; its full sequence is AA9 family lytic polysaccharide monooxygenase B (357 aa).

The signal sequence occupies residues 1-18 (MKFSSVLALAASAKLVAS). His19 and His101 together coordinate Cu(2+). Residues 19 to 234 (HATVFAVWIN…IPGPAVWDGA (216 aa)) are catalytic. Cys61 and Cys182 form a disulfide bridge. O2-binding residues include His168 and Gln177. Tyr179 lines the Cu(2+) pocket. The tract at residues 235-318 (SSGSGSSGSG…SAAPTGGTGT (84 aa)) is ser/Thr-rich linker. The segment at 292–317 (SVRPTTSAAPTTSAPTSSAAPTGGTG) is disordered. The span at 295–313 (PTTSAAPTTSAPTSSAAPT) shows a compositional bias: low complexity. Positions 319-355 (GSIQIYQQCGGMNYKGATGCASGLTCKQWNPYYHQCV) constitute a CBM1 domain.

This sequence belongs to the polysaccharide monooxygenase AA9 family. The cofactor is Cu(2+).

It is found in the secreted. The catalysed reaction is [(1-&gt;4)-beta-D-glucosyl]n+m + reduced acceptor + O2 = 4-dehydro-beta-D-glucosyl-[(1-&gt;4)-beta-D-glucosyl]n-1 + [(1-&gt;4)-beta-D-glucosyl]m + acceptor + H2O.. Lytic polysaccharide monooxygenase (LPMO) that depolymerizes crystalline and amorphous polysaccharides via the oxidation of scissile alpha- or beta-(1-4)-glycosidic bonds, yielding C4 oxidation products. Catalysis by LPMOs requires the reduction of the active-site copper from Cu(II) to Cu(I) by a reducing agent and H(2)O(2) or O(2) as a cosubstrate. Active on carboxymethylcellulose (CMC), hydroxyethylcellulose (HEC) and beta-glucan. Also active on soluble cellohexaose, a property that is restricted to only a few characterized LPMOs. In Emericella nidulans (strain FGSC A4 / ATCC 38163 / CBS 112.46 / NRRL 194 / M139) (Aspergillus nidulans), this protein is AA9 family lytic polysaccharide monooxygenase B.